The primary structure comprises 233 residues: Inner kinetochore subunit fta4 (233 aa).

Residues Thr189 and Thr191 each carry the phosphothreonine modification.

It belongs to the NKP1 family. In terms of assembly, component of the inner kinetochore constitutive centromere-associated network (CCAN) (also known as central kinetochore Sim4 complex in fission yeast), which is composed of at least cnl2, cnp3, cnp20, fta1, fta2, fta3, fta4, fta6, fta7, mal2, mhf1, mhf2, mis6, mis15, mis17, sim4 and wip1.

Its subcellular location is the nucleus. The protein resides in the chromosome. It is found in the centromere. The protein localises to the kinetochore. Its function is as follows. Component of the kinetochore, a multiprotein complex that assembles on centromeric DNA and attaches chromosomes to spindle microtubules, mediating chromosome segregation and sister chromatid segregation during meiosis and mitosis. Component of the inner kinetochore constitutive centromere-associated network (CCAN), which serves as a structural platform for outer kinetochore assembly. Fta2, fta3 and fta4 associate with the central core (cnt) and inner repeat (inr) region of the centromere. This Schizosaccharomyces pombe (strain 972 / ATCC 24843) (Fission yeast) protein is Inner kinetochore subunit fta4 (fta4).